The sequence spans 354 residues: Uroporphyrinogen decarboxylase (354 aa).

Substrate contacts are provided by residues 27–31 (RQAGR), Asp-77, Tyr-154, Thr-209, and His-327.

This sequence belongs to the uroporphyrinogen decarboxylase family. Homodimer.

It is found in the cytoplasm. It catalyses the reaction uroporphyrinogen III + 4 H(+) = coproporphyrinogen III + 4 CO2. The protein operates within porphyrin-containing compound metabolism; protoporphyrin-IX biosynthesis; coproporphyrinogen-III from 5-aminolevulinate: step 4/4. Catalyzes the decarboxylation of four acetate groups of uroporphyrinogen-III to yield coproporphyrinogen-III. The polypeptide is Uroporphyrinogen decarboxylase (Pectobacterium atrosepticum (strain SCRI 1043 / ATCC BAA-672) (Erwinia carotovora subsp. atroseptica)).